We begin with the raw amino-acid sequence, 1097 residues long: DNA-directed RNA polymerase subunit beta (1097 aa).

This sequence belongs to the RNA polymerase beta chain family. As to quaternary structure, in plastids the minimal PEP RNA polymerase catalytic core is composed of four subunits: alpha, beta, beta', and beta''. When a (nuclear-encoded) sigma factor is associated with the core the holoenzyme is formed, which can initiate transcription.

The protein localises to the plastid. It is found in the chloroplast. It carries out the reaction RNA(n) + a ribonucleoside 5'-triphosphate = RNA(n+1) + diphosphate. DNA-dependent RNA polymerase catalyzes the transcription of DNA into RNA using the four ribonucleoside triphosphates as substrates. This chain is DNA-directed RNA polymerase subunit beta, found in Rhodomonas salina (Cryptomonas salina).